The primary structure comprises 226 residues: Large ribosomal subunit protein uL1 (226 aa).

This sequence belongs to the universal ribosomal protein uL1 family. In terms of assembly, part of the 50S ribosomal subunit.

Its function is as follows. Binds directly to 23S rRNA. The L1 stalk is quite mobile in the ribosome, and is involved in E site tRNA release. In terms of biological role, protein L1 is also a translational repressor protein, it controls the translation of the L11 operon by binding to its mRNA. The chain is Large ribosomal subunit protein uL1 from Buchnera aphidicola subsp. Cinara cedri (strain Cc).